Reading from the N-terminus, the 333-residue chain is PDZ domain-containing protein GIPC1 (333 aa).

A compositionally biased stretch (basic residues) spans Met-1–Ala-11. Residues Met-1 to Leu-54 form a disordered region. The span at Gly-23–Gln-44 shows a compositional bias: gly residues. Ser-68 carries the phosphoserine modification. Positions Glu-133–Glu-213 constitute a PDZ domain. Phosphoserine is present on residues Ser-222, Ser-225, and Ser-232. Residues Gln-223–Arg-244 form a disordered region. The segment covering Gly-228–Arg-240 has biased composition (gly residues). Thr-242 carries the phosphothreonine modification. Ser-247 carries the phosphoserine modification.

The protein belongs to the GIPC family. In terms of assembly, interacts with GLUT1 (C-terminus), ACTN1, KIF1B, MYO6, PLEKHG5, SDC4/syndecan-4 and SEMA4C/semaphorin-4C. Interacts with RGS19 C-terminus. Interacts with HTLV-I Tax through the PDZ domain. In terms of tissue distribution, widely expressed. Expressed in skeletal muscle (at protein level).

The protein localises to the cytoplasm. It localises to the membrane. Functionally, may be involved in G protein-linked signaling. The protein is PDZ domain-containing protein GIPC1 (GIPC1) of Homo sapiens (Human).